A 601-amino-acid polypeptide reads, in one-letter code: Probable protein arginine N-methyltransferase 3 (601 aa).

Residues 1 to 10 show a composition bias toward basic and acidic residues; the sequence is MAATMVKHEI. Residues 1–50 are disordered; it reads MAATMVKHEILNYSEDEEENYSDEGDWGDWKADDNGIEGGEEEEEDDGDD. Composition is skewed to acidic residues over residues 14-27 and 35-50; these read SEDE…EGDW and NGIE…DGDD. Residues 57–78 form a C2H2-type zinc finger; that stretch reads CLFCDSHFVSCDLLFEHCRLSH. Residues 242–554 form the SAM-dependent MTase PRMT-type domain; that stretch reads NENYFGSYSS…NDRREAIGTE (313 aa). S-adenosyl-L-homocysteine-binding residues include R264, G288, E310, S312, V345, and E346. Catalysis depends on residues E365 and E374.

This sequence belongs to the class I-like SAM-binding methyltransferase superfamily. Protein arginine N-methyltransferase family.

The protein resides in the cytoplasm. The protein localises to the cytosol. The enzyme catalyses L-arginyl-[protein] + S-adenosyl-L-methionine = N(omega)-methyl-L-arginyl-[protein] + S-adenosyl-L-homocysteine + H(+). It carries out the reaction L-arginyl-[protein] + 2 S-adenosyl-L-methionine = N(omega),N(omega)-dimethyl-L-arginyl-[protein] + 2 S-adenosyl-L-homocysteine + 2 H(+). Its function is as follows. Protein-arginine N-methyltransferase that catalyzes both the monomethylation and asymmetric dimethylation of the guanidino nitrogens of arginine residues in target proteins, and therefore falls into the group of type I methyltransferases. The protein is Probable protein arginine N-methyltransferase 3 (PRMT3) of Arabidopsis thaliana (Mouse-ear cress).